The primary structure comprises 337 residues: uncharacterized protein (337 aa).

Belongs to the NAD(P)-dependent epimerase/dehydratase family.

This is an uncharacterized protein from Escherichia coli (strain K12).